Consider the following 197-residue polypeptide: MAASPKINRREHILQCLATMLETSPGQRITTAKLAAEVGVSEAALYRHFPSKARMFEGLIEFIEESLLSRINLIMDEEKDTMKRCQQLLQLLLVFAERNPGISRVLNGDALLGENERLRSRISQLFSKIETHLKQILREKSLREGKGFELDEAVLANLLLAVAEGRIAQFVRSEFKLKPTKHFNEQWNFIQQQLLQS.

One can recognise an HTH tetR-type domain in the interval 7–67 (INRREHILQC…GLIEFIEESL (61 aa)). The H-T-H motif DNA-binding region spans 30-49 (TTAKLAAEVGVSEAALYRHF). A coiled-coil region spans residues 109-136 (DALLGENERLRSRISQLFSKIETHLKQI).

The protein belongs to the nucleoid occlusion factor SlmA family. Homodimer. Interacts with FtsZ.

Its subcellular location is the cytoplasm. The protein resides in the nucleoid. In terms of biological role, required for nucleoid occlusion (NO) phenomenon, which prevents Z-ring formation and cell division over the nucleoid. Acts as a DNA-associated cell division inhibitor that binds simultaneously chromosomal DNA and FtsZ, and disrupts the assembly of FtsZ polymers. SlmA-DNA-binding sequences (SBS) are dispersed on non-Ter regions of the chromosome, preventing FtsZ polymerization at these regions. This chain is Nucleoid occlusion factor SlmA, found in Shewanella pealeana (strain ATCC 700345 / ANG-SQ1).